Reading from the N-terminus, the 797-residue chain is Inactive deaminase YBR284W (797 aa).

Residues 627-647 (LVYLFYLSQIPMVVAPLNSIV) form a helical membrane-spanning segment.

It belongs to the metallo-dependent hydrolases superfamily. Adenosine and AMP deaminases family.

The protein resides in the membrane. This Saccharomyces cerevisiae (strain ATCC 204508 / S288c) (Baker's yeast) protein is Inactive deaminase YBR284W.